Reading from the N-terminus, the 218-residue chain is 23 kDa integral membrane protein (218 aa).

Residues 1–12 (MATLGTGMRCLK) are Cytoplasmic-facing. The chain crosses the membrane as a helical span at residues 13–36 (SCVFVLNIICLLCSLVLIGAGAYV). Over 37-55 (EVKFSQYGDNLHKVWQAAP) the chain is Extracellular. The chain crosses the membrane as a helical span at residues 56-71 (IAIIVVGVIILIVSFL). At 72–82 (GCCGAIKENVC) the chain is on the cytoplasmic side. Residues 83 to 108 (MLYMYAFFLVVLLIAELAAAIVAVVY) traverse the membrane as a helical segment. Over 109 to 183 (KDRIDSEIDA…SVFGAFLKRN (75 aa)) the chain is Extracellular. Residue Asn-165 is glycosylated (N-linked (GlcNAc...) asparagine). Residues 184-205 (LVIVACVAFGVCFFQLLSIVIA) form a helical membrane-spanning segment. Over 206-218 (CCLGRQIKEYENV) the chain is Cytoplasmic.

It belongs to the tetraspanin (TM4SF) family.

The protein localises to the membrane. This is 23 kDa integral membrane protein from Schistosoma mansoni (Blood fluke).